Reading from the N-terminus, the 2056-residue chain is E3 ubiquitin-protein ligase TRIP12 (2056 aa).

2 stretches are compositionally biased toward polar residues: residues 1–10 (MSSRPNNNPG) and 18–27 (RNTAGAQPQE). The segment at 1–440 (MSSRPNNNPG…SGESESDDSE (440 aa)) is disordered. Residues 39-51 (AENKTHSLPESRK) show a composition bias toward basic and acidic residues. Composition is skewed to polar residues over residues 58-67 (KVQSNTTSGP) and 153-168 (SQEQ…STSK). 2 stretches are compositionally biased toward low complexity: residues 213 to 226 (LSKL…SAKA) and 234 to 253 (SSSS…VSAA). Polar residues-rich tracts occupy residues 317 to 327 (PGSSKTETSKP) and 363 to 375 (QKTT…TSRR). Residues 383-395 (AAAEARRQEKMAD) show a composition bias toward basic and acidic residues. Low complexity predominate over residues 415–433 (GAAASSSVAGAVGMTTSGE). In terms of domain architecture, WWE spans 791-905 (MLKKGNAQNT…DPELAKSFIK (115 aa)). Over residues 1027-1042 (TTISTGSGTASGNSAA) the composition is skewed to low complexity. Disordered stretches follow at residues 1027-1147 (TTIS…ASKD), 1465-1500 (EEEE…DELW), and 1632-1651 (TNPE…PRLD). Residues 1069–1082 (KRKRLPKRGPRRPK) are compositionally biased toward basic residues. Over residues 1085–1094 (PPRDEDKVDN) the composition is skewed to basic and acidic residues. Polar residues-rich tracts occupy residues 1095 to 1106 (QAKSPTTTQSPK) and 1119 to 1129 (RLSTQSNSNNI). The tract at residues 1560–1634 (EIIPTSEFNN…AMQRLLDTNP (75 aa)) is K-box. Residues 1949–2056 (PDHGYTHDSR…REGQQSFHLS (108 aa)) form the HECT domain. The active-site Glycyl thioester intermediate is Cys-2023.

This sequence belongs to the UPL family. K-HECT subfamily.

Its subcellular location is the nucleus. The protein localises to the nucleoplasm. It carries out the reaction S-ubiquitinyl-[E2 ubiquitin-conjugating enzyme]-L-cysteine + [acceptor protein]-L-lysine = [E2 ubiquitin-conjugating enzyme]-L-cysteine + N(6)-ubiquitinyl-[acceptor protein]-L-lysine.. The protein operates within protein modification; protein ubiquitination. E3 ubiquitin-protein ligase involved in ubiquitin fusion degradation (UFD) pathway and regulation of DNA repair. Part of the ubiquitin fusion degradation (UFD) pathway, a process that mediates ubiquitination of protein at their N-terminus, regardless of the presence of lysine residues in target proteins. Acts as a key regulator of DNA damage response by acting as a suppressor of RNF168, an E3 ubiquitin-protein ligase that promotes accumulation of 'Lys-63'-linked histone H2A and H2AX at DNA damage sites, thereby acting as a guard against excessive spreading of ubiquitinated chromatin at damaged chromosomes. The protein is E3 ubiquitin-protein ligase TRIP12 (trip12) of Xenopus tropicalis (Western clawed frog).